The chain runs to 186 residues: Adenylate kinase isoenzyme 6 homolog (186 aa).

Positions 15, 17, 18, 19, and 20 each coordinate ATP. Residues Asn-48 to Tyr-71 form an NMPbind region. Positions Lys-126 to Asn-136 are LID. Residue Arg-127 coordinates ATP.

This sequence belongs to the adenylate kinase family. AK6 subfamily. In terms of assembly, monomer and homodimer. Interacts with small ribosomal subunit protein uS11. Not a structural component of 43S pre-ribosomes, but transiently interacts with them by binding to uS11.

Its subcellular location is the cytoplasm. It is found in the nucleus. The enzyme catalyses AMP + ATP = 2 ADP. It carries out the reaction ATP + H2O = ADP + phosphate + H(+). Its function is as follows. Broad-specificity nucleoside monophosphate (NMP) kinase that catalyzes the reversible transfer of the terminal phosphate group between nucleoside triphosphates and monophosphates. Also has ATPase activity. Involved in the late cytoplasmic maturation steps of the 40S ribosomal particles, specifically 18S rRNA maturation. While NMP activity is not required for ribosome maturation, ATPase activity is. Associates transiently with small ribosomal subunit protein uS11. ATP hydrolysis breaks the interaction with uS11. May temporarily remove uS11 from the ribosome to enable a conformational change of the ribosomal RNA that is needed for the final maturation step of the small ribosomal subunit. Its NMP activity may have a role in nuclear energy homeostasis. The protein is Adenylate kinase isoenzyme 6 homolog of Plasmodium falciparum (isolate 3D7).